The following is a 300-amino-acid chain: Phosphoenolpyruvate phosphomutase (300 aa).

A propeptide spanning residues 1 to 10 (MLANSLKSFF) is cleaved from the precursor. Catalysis depends on D66, which acts as the Nucleophile.

This sequence belongs to the isocitrate lyase/PEP mutase superfamily. PEP mutase family.

The catalysed reaction is phosphoenolpyruvate + H(+) = 3-phosphonopyruvate. Its pathway is phosphorus metabolism; phosphonate biosynthesis. Functionally, formation of a carbon-phosphorus bond by converting phosphoenolpyruvate (PEP) to phosphonopyruvate (P-Pyr). This is Phosphoenolpyruvate phosphomutase (PEPM) from Tetrahymena pyriformis.